The chain runs to 501 residues: 4,4'-diapophytoene desaturase (4,4'-diaponeurosporene-forming) (501 aa).

Residue 5–17 (VVGAGVTGLAAAA) coordinates FAD.

Belongs to the carotenoid/retinoid oxidoreductase family. CrtN subfamily.

The catalysed reaction is 15-cis-4,4'-diapophytoene + 3 FAD + 3 H(+) = all-trans-4,4'-diaponeurosporene + 3 FADH2. The protein operates within carotenoid biosynthesis; staphyloxanthin biosynthesis; staphyloxanthin from farnesyl diphosphate: step 2/5. Functionally, involved in the biosynthesis of the yellow-orange carotenoid staphyloxanthin, which plays a role in the virulence via its protective function against oxidative stress. Catalyzes three successive dehydrogenation reactions that lead to the introduction of three double bonds into 4,4'-diapophytoene (dehydrosqualene), with 4,4'-diapophytofluene and 4,4'-diapo-zeta-carotene as intermediates, and 4,4'-diaponeurosporene (the major deep-yellow pigment in staphylococci strains) as the end product. This is 4,4'-diapophytoene desaturase (4,4'-diaponeurosporene-forming) from Staphylococcus haemolyticus (strain JCSC1435).